We begin with the raw amino-acid sequence, 201 residues long: MLEAIKTFMILYTGMFAITNPIGAVPVFMSVVGHLPAEIKHEVAKKVSITVFITLTVFALVGQWIFKFFGSSIDAFAIAGGILLFRMGMEMLSGKLSSVKIDEEDVTLEEVAVIPLAIPLISGPGAITTVMLYMTKESPGIVILTIIAIGLTTYGILYSGNKIIERLGRVGVKVTTRMMGLILTSMAMQMIINGIKGAFGI.

6 helical membrane-spanning segments follow: residues 8-28 (FMIL…VPVF), 49-69 (ITVF…FKFF), 73-93 (IDAF…EMLS), 111-131 (VAVI…TTVM), 140-160 (GIVI…LYSG), and 181-201 (LILT…AFGI).

The protein belongs to the UPF0056 (MarC) family.

It localises to the cell membrane. This chain is UPF0056 membrane protein PH0760, found in Pyrococcus horikoshii (strain ATCC 700860 / DSM 12428 / JCM 9974 / NBRC 100139 / OT-3).